The following is a 248-amino-acid chain: UDP-2,3-diacylglucosamine hydrolase (248 aa).

Mn(2+)-binding residues include Asp-8, His-10, Asp-41, Asn-79, and His-114. 79-80 serves as a coordination point for substrate; that stretch reads NR. Residues Asp-122, Ser-160, Asp-171, and His-202 each contribute to the substrate site. Mn(2+) contacts are provided by His-202 and His-204.

The protein belongs to the LpxH family. Mn(2+) serves as cofactor.

Its subcellular location is the cell inner membrane. It catalyses the reaction UDP-2-N,3-O-bis[(3R)-3-hydroxytetradecanoyl]-alpha-D-glucosamine + H2O = 2-N,3-O-bis[(3R)-3-hydroxytetradecanoyl]-alpha-D-glucosaminyl 1-phosphate + UMP + 2 H(+). It functions in the pathway glycolipid biosynthesis; lipid IV(A) biosynthesis; lipid IV(A) from (3R)-3-hydroxytetradecanoyl-[acyl-carrier-protein] and UDP-N-acetyl-alpha-D-glucosamine: step 4/6. Its function is as follows. Hydrolyzes the pyrophosphate bond of UDP-2,3-diacylglucosamine to yield 2,3-diacylglucosamine 1-phosphate (lipid X) and UMP by catalyzing the attack of water at the alpha-P atom. Involved in the biosynthesis of lipid A, a phosphorylated glycolipid that anchors the lipopolysaccharide to the outer membrane of the cell. The chain is UDP-2,3-diacylglucosamine hydrolase from Stenotrophomonas maltophilia (strain R551-3).